The chain runs to 817 residues: Transcription factor SPT20 homolog-like 2 (817 aa).

Basic and acidic residues predominate over residues 1–14 (MDRDLEQALDRTEN). 5 disordered regions span residues 1-28 (MDRDLEQALDRTENITEIAQQRRPRRRY), 249-275 (PQQEQSDCPPPPELRVSTSGQKEERKV), 369-553 (PRKK…AAGR), 598-630 (PGSGAPAPAGISGSGLQSSGGPLPDARPGAVQA), and 675-697 (QLQQPTAAHPPQPGPQGSTLGLS). Residues 423–440 (SHSSSGPASVSQLSSWKT) are compositionally biased toward polar residues. Low complexity-rich tracts occupy residues 469–479 (SSSGKISSGNS), 494–505 (PAAAPAVAAAAP), 513–531 (AAPALAAAAVAAAAGGAAP), and 598–618 (PGSGAPAPAGISGSGLQSSGG).

This sequence belongs to the SPT20 family.

This chain is Transcription factor SPT20 homolog-like 2 (SUPT20HL2), found in Homo sapiens (Human).